A 202-amino-acid polypeptide reads, in one-letter code: Protein phosphatase 1 regulatory subunit 1B (202 aa).

The residue at position 1 (Met1) is an N-acetylmethionine. The tract at residues 1–202 (MDPKDRKKIQ…QRPAHPEPGT (202 aa)) is disordered. The residue at position 34 (Thr34) is a Phosphothreonine; by PKA. Residues 41–63 (LSEHSSPEEEASPHQRASGEGHH) show a composition bias toward basic and acidic residues. Ser45 and Ser46 each carry phosphoserine. The residue at position 75 (Thr75) is a Phosphothreonine; by CDK5. Polar residues predominate over residues 89–100 (HLQSISNLGENQ). The residue at position 102 (Ser102) is a Phosphoserine. The span at 109-118 (GELRELGYPR) shows a compositional bias: basic and acidic residues. Residues 119–136 (EEEEEEEEEDEEEEEDSQ) show a composition bias toward acidic residues. Ser135 is subject to Phosphoserine. Positions 191 to 202 (EPQRPAHPEPGT) are enriched in basic and acidic residues.

This sequence belongs to the protein phosphatase inhibitor 1 family. Post-translationally, dopamine- and cyclic AMP-regulated neuronal phosphoprotein. Phosphorylation of Thr-34 is required for activity.

The protein resides in the cytoplasm. In terms of biological role, inhibitor of protein-phosphatase 1. This chain is Protein phosphatase 1 regulatory subunit 1B (PPP1R1B), found in Bos taurus (Bovine).